The sequence spans 370 residues: Tryptophan--tRNA ligase (370 aa).

A 'HIGH' region motif is present at residues 75-83 (PSGKMHFGH). The 'KMSKS' region motif lies at 255–259 (KMSSS).

This sequence belongs to the class-I aminoacyl-tRNA synthetase family.

The protein resides in the cytoplasm. It carries out the reaction tRNA(Trp) + L-tryptophan + ATP = L-tryptophyl-tRNA(Trp) + AMP + diphosphate + H(+). This Methanocaldococcus jannaschii (strain ATCC 43067 / DSM 2661 / JAL-1 / JCM 10045 / NBRC 100440) (Methanococcus jannaschii) protein is Tryptophan--tRNA ligase.